Reading from the N-terminus, the 456-residue chain is Acetylcholine receptor subunit alpha (456 aa).

The first 20 residues, Met-1 to Cys-20, serve as a signal peptide directing secretion. The Extracellular segment spans residues Ser-21 to Leu-230. Disulfide bonds link Cys-148–Cys-162 and Cys-212–Cys-213. N-linked (GlcNAc...) asparagine glycosylation occurs at Asn-161. 3 consecutive transmembrane segments (helical) span residues Pro-231–Leu-255, Met-263–Val-281, and Tyr-297–Ile-316. The Cytoplasmic portion of the chain corresponds to Asn-317 to His-428. The helical transmembrane segment at Ile-429–Ala-447 threads the bilayer.

The protein belongs to the ligand-gated ion channel (TC 1.A.9) family. Acetylcholine receptor (TC 1.A.9.1) subfamily. Alpha-1/CHRNA1 sub-subfamily. As to quaternary structure, one of the alpha chains that assemble within the acetylcholine receptor, a pentamer of two alpha chains, a beta, a delta, and a gamma or epsilon chains.

The protein localises to the postsynaptic cell membrane. The protein resides in the cell membrane. The enzyme catalyses K(+)(in) = K(+)(out). It carries out the reaction Na(+)(in) = Na(+)(out). Functionally, upon acetylcholine binding, the AChR responds by an extensive change in conformation that affects all subunits and leads to opening of an ion-conducting channel across the plasma membrane. The protein is Acetylcholine receptor subunit alpha (chrna1) of Danio rerio (Zebrafish).